Consider the following 273-residue polypeptide: Nickel import ATP-binding protein NikE (273 aa).

The ABC transporter domain maps to 13-252 (YRTGGLLRKR…AHPVGRQLQA (240 aa)). 45–52 (GSSGSGKS) lines the ATP pocket.

The protein belongs to the ABC transporter superfamily. Nickel importer (TC 3.A.1.5.3) family. As to quaternary structure, the complex is composed of two ATP-binding proteins (NikD and NikE), two transmembrane proteins (NikB and NikC) and a solute-binding protein (NikA).

The protein localises to the cell inner membrane. The enzyme catalyses Ni(2+)(out) + ATP + H2O = Ni(2+)(in) + ADP + phosphate + H(+). In terms of biological role, part of the ABC transporter complex NikABCDE involved in nickel import. Responsible for energy coupling to the transport system. This chain is Nickel import ATP-binding protein NikE, found in Pseudomonas putida (strain ATCC 47054 / DSM 6125 / CFBP 8728 / NCIMB 11950 / KT2440).